Here is a 642-residue protein sequence, read N- to C-terminus: Threonine--tRNA ligase (642 aa).

A TGS domain is found at 1–61 (MPVITLPDGS…DADATVAIIT (61 aa)). Residues 243-534 (DHRKIGKQLD…LTEEFAGFFP (292 aa)) form a catalytic region. Residues Cys334, His385, and His511 each contribute to the Zn(2+) site.

The protein belongs to the class-II aminoacyl-tRNA synthetase family. As to quaternary structure, homodimer. The cofactor is Zn(2+).

The protein resides in the cytoplasm. It carries out the reaction tRNA(Thr) + L-threonine + ATP = L-threonyl-tRNA(Thr) + AMP + diphosphate + H(+). Catalyzes the attachment of threonine to tRNA(Thr) in a two-step reaction: L-threonine is first activated by ATP to form Thr-AMP and then transferred to the acceptor end of tRNA(Thr). Also edits incorrectly charged L-seryl-tRNA(Thr). This is Threonine--tRNA ligase from Edwardsiella ictaluri (strain 93-146).